The chain runs to 135 residues: Agouti-signaling protein (135 aa).

The N-terminal stretch at 1 to 22 (MNILRLLLATLLVCLCLLTAYS) is a signal peptide. An N-linked (GlcNAc...) asparagine glycan is attached at Asn-39. The interval 56–101 (NKKSKKISRKEAEKKRSSKKKASMKNVAQPRRPRPPPPAPCVATRD) is disordered. 5 disulfide bridges follow: Cys-96/Cys-111, Cys-103/Cys-117, Cys-110/Cys-128, Cys-114/Cys-135, and Cys-119/Cys-126. The region spanning 96 to 135 (CVATRDSCKPPAPACCDPCASCQCRFFRSSCSCRVLNPTC) is the Agouti domain.

Its subcellular location is the secreted. Functionally, involved in the regulation of melanogenesis. The binding of ASP to MC1R precludes alpha-MSH initiated signaling and thus blocks production of cAMP, leading to a down-regulation of eumelanogenesis (brown/black pigment) and thus increasing synthesis of pheomelanin (yellow/red pigment). This is Agouti-signaling protein (ASIP) from Felis catus (Cat).